We begin with the raw amino-acid sequence, 322 residues long: Hydroxypyruvate reductase (322 aa).

Residues 160–161 (RI), Asp-180, 211–212 (CP), 238–240 (NSR), and Asp-264 each bind NAD(+). Arg-240 is an active-site residue. The active site involves Glu-269. His-288 functions as the Proton donor in the catalytic mechanism.

It belongs to the D-isomer specific 2-hydroxyacid dehydrogenase family.

The catalysed reaction is (R)-glycerate + NAD(+) = 3-hydroxypyruvate + NADH + H(+). It participates in carbohydrate metabolism. Involved in catabolism of D-apiose. Catalyzes the reduction of 3-hydroxypyruvate to glycerate. The chain is Hydroxypyruvate reductase from Blautia hydrogenotrophica (strain DSM 10507 / JCM 14656 / S5a33) (Ruminococcus hydrogenotrophicus).